The chain runs to 334 residues: Holliday junction branch migration complex subunit RuvB (334 aa).

The tract at residues 1–181 is large ATPase domain (RuvB-L); that stretch reads MTRILDNDLM…FGITGHMEYY (181 aa). Residues Leu-20, Arg-21, Gly-62, Lys-65, Thr-66, Thr-67, 128–130, Arg-171, Tyr-181, and Arg-218 each bind ATP; that span reads EDF. Thr-66 is a binding site for Mg(2+). Residues 182-252 are small ATPAse domain (RuvB-S); that stretch reads QVDDLTEIVE…MTDKALEMLD (71 aa). Residues 255–334 are head domain (RuvB-H); it reads HEGLDYVDQK…LKYPLDTKTE (80 aa). DNA contacts are provided by Arg-291, Arg-310, Arg-312, and Arg-315.

Belongs to the RuvB family. Homohexamer. Forms an RuvA(8)-RuvB(12)-Holliday junction (HJ) complex. HJ DNA is sandwiched between 2 RuvA tetramers; dsDNA enters through RuvA and exits via RuvB. An RuvB hexamer assembles on each DNA strand where it exits the tetramer. Each RuvB hexamer is contacted by two RuvA subunits (via domain III) on 2 adjacent RuvB subunits; this complex drives branch migration. In the full resolvosome a probable DNA-RuvA(4)-RuvB(12)-RuvC(2) complex forms which resolves the HJ.

The protein resides in the cytoplasm. It carries out the reaction ATP + H2O = ADP + phosphate + H(+). Its function is as follows. The RuvA-RuvB-RuvC complex processes Holliday junction (HJ) DNA during genetic recombination and DNA repair, while the RuvA-RuvB complex plays an important role in the rescue of blocked DNA replication forks via replication fork reversal (RFR). RuvA specifically binds to HJ cruciform DNA, conferring on it an open structure. The RuvB hexamer acts as an ATP-dependent pump, pulling dsDNA into and through the RuvAB complex. RuvB forms 2 homohexamers on either side of HJ DNA bound by 1 or 2 RuvA tetramers; 4 subunits per hexamer contact DNA at a time. Coordinated motions by a converter formed by DNA-disengaged RuvB subunits stimulates ATP hydrolysis and nucleotide exchange. Immobilization of the converter enables RuvB to convert the ATP-contained energy into a lever motion, pulling 2 nucleotides of DNA out of the RuvA tetramer per ATP hydrolyzed, thus driving DNA branch migration. The RuvB motors rotate together with the DNA substrate, which together with the progressing nucleotide cycle form the mechanistic basis for DNA recombination by continuous HJ branch migration. Branch migration allows RuvC to scan DNA until it finds its consensus sequence, where it cleaves and resolves cruciform DNA. This is Holliday junction branch migration complex subunit RuvB from Streptococcus uberis (strain ATCC BAA-854 / 0140J).